The chain runs to 177 residues: MSRIGKQPVSIPSGVECSIKGQLLSVKGKKGQMTLDLHPFTKITSEDGFLKLNPVVEDRDHWAICGTMRALVHNMVVGVTQGFEKKLLLMGVGYRAQAQGQKLTLVLGFSHPVEYAVPQGITIETPTPTEIIVKGFDKQLVGEVAAKIRAYRPPEPYKGKGVRYAGEYVMIKEAKKK.

The protein belongs to the universal ribosomal protein uL6 family. As to quaternary structure, part of the 50S ribosomal subunit.

Functionally, this protein binds to the 23S rRNA, and is important in its secondary structure. It is located near the subunit interface in the base of the L7/L12 stalk, and near the tRNA binding site of the peptidyltransferase center. The chain is Large ribosomal subunit protein uL6 from Dichelobacter nodosus (strain VCS1703A).